A 391-amino-acid polypeptide reads, in one-letter code: MSLNPRDVVIVDFGRTPMGRSKGGMHRNTRAEDMSAHLISKLLERNNKVDPAEVEDVIWGCVNQTLEQGWNIARMASLLTQIPHTSAAQTVSRLCGSSMSALHTAAQAIMTNNGDVFVIGGVEHMGHVSMMHGVDPNPHMSLHAAKASGMMGLTAEMLGKMHGITREQQDAFGLRSHQLAHKATLEGKFKDEIIPMQGYDENGFLKVFDYDETIRPDTTLESLAALKPAFNPKGGTVTAGTSSQITDGASCMIVMSAQRAQDLGIQPLAVIRSMAVAGVDPAIMGYGPVPATQKALKRAGLTIADIDFIELNEAFAAQALPVLKDLKVLDKMNEKVNLHGGAIALGHPFGCSGARISGTLLNVMKQNGGTFGVSTMCIGLGQGIATVFERV.

C95 (acyl-thioester intermediate) is an active-site residue. Catalysis depends on proton acceptor residues H347 and C377.

It belongs to the thiolase-like superfamily. Thiolase family. In terms of assembly, heterotetramer of two alpha chains (FadB) and two beta chains (FadA).

The protein localises to the cytoplasm. The enzyme catalyses an acyl-CoA + acetyl-CoA = a 3-oxoacyl-CoA + CoA. The protein operates within lipid metabolism; fatty acid beta-oxidation. Its function is as follows. Catalyzes the final step of fatty acid oxidation in which acetyl-CoA is released and the CoA ester of a fatty acid two carbons shorter is formed. The polypeptide is 3-ketoacyl-CoA thiolase (Pseudomonas savastanoi pv. phaseolicola (strain 1448A / Race 6) (Pseudomonas syringae pv. phaseolicola (strain 1448A / Race 6))).